A 499-amino-acid polypeptide reads, in one-letter code: Serine/threonine protein phosphatase 2A 57 kDa regulatory subunit B' beta isoform (499 aa).

Residues 1 to 13 (MFKKIMKGGHRKP) show a composition bias toward basic residues. Residues 1-65 (MFKKIMKGGH…PVTATPPPPP (65 aa)) form a disordered region.

This sequence belongs to the phosphatase 2A regulatory subunit B56 family. In terms of assembly, PP2A consists of a common heteromeric enzyme, composed of a catalytic subunit (subunits C), a constant regulatory subunit (subunit A), and a variety of regulatory subunits such as subunits B (the R2/B/PR55/B55, R3/B''/PR72/PR130/PR59 and R5/B'/B56 families). Interacts with BZR1. Interacts with BRI1. Interacts with SRK2E/OST1. As to expression, expressed ubiquitously, higher levels in cotyledons and flowers.

It is found in the nucleus. It localises to the cytoplasm. In terms of biological role, the B regulatory subunit may modulate substrate selectivity and catalytic activity, and may also direct the localization of the catalytic enzyme to a particular subcellular compartment. Required for the formation of the PP2A holoenzyme that positively regulates brassinosteroid signaling by dephosphorylating and activating BZR1. The protein is Serine/threonine protein phosphatase 2A 57 kDa regulatory subunit B' beta isoform (B'BETA) of Arabidopsis thaliana (Mouse-ear cress).